The sequence spans 310 residues: MSPTVQCGAVSQVVVVGGTHGNEMSGVCLAKHWLQDPSELHRKSFTAEVLLANPIAVERCVRYIDRDLNRSFSHELLSASGSESDSYEAKRAREIYQKYGPKQSSLNFVIDLHNTTSNMGTTFLLFKGDNFALHLANYLQTKCVDPSFPCHILLIDIPEGGHVHLQSMGKHSVSLELGPQPQGVARADVLTRMRALVNCSLDFLDLFNQGTEFPSFETDVHQVLYRADFPRNEDGEIEAVIHSELQDKDYLPLKPGDPIFQRLNGEDILYNGEKQIYPVFINEAAYYEKKVAFIATEKTHCLVPALKVQN.

Zn(2+) is bound by residues His-20 and Glu-23. Substrate contacts are provided by residues Arg-62 and 69 to 70 (NR). His-113 serves as a coordination point for Zn(2+). Residues Glu-176 and Tyr-286 each coordinate substrate.

Belongs to the AspA/AstE family. Aspartoacylase subfamily. As to quaternary structure, homotetramer. It depends on Zn(2+) as a cofactor.

The protein localises to the apical cell membrane. Its subcellular location is the cytoplasm. It carries out the reaction an N-acyl-aromatic L-alpha-amino acid + H2O = an aromatic L-alpha-amino acid + a carboxylate. It catalyses the reaction an N-acetyl-L-cysteine-S-conjugate + H2O = an S-substituted L-cysteine + acetate. Functionally, plays an important role in deacetylating mercapturic acids in kidney proximal tubules. This Xenopus tropicalis (Western clawed frog) protein is N-acyl-aromatic-L-amino acid amidohydrolase (carboxylate-forming) (acy3).